The chain runs to 2148 residues: Polyketide synthase 1 (2148 aa).

Residues 19-261 (FIFGDQSSCN…TPLAVHAPYH (243 aa)) form an N-terminal acylcarrier protein transacylase domain (SAT) region. The region spanning 394–829 (DSKIAIIGMS…GGNTALLVED (436 aa)) is the Ketosynthase family 3 (KS3) domain. Active-site for beta-ketoacyl synthase activity residues include cysteine 566, histidine 701, and histidine 745. Residues 929-1233 (AFVFSGQGSQ…PSLMRNKDGW (305 aa)) form a malonyl-CoA:ACP transacylase (MAT) domain region. The active-site For acyl/malonyl transferase activity is serine 1018. The tract at residues 1310–1624 (TASVHRIVHE…RKVLNTAMPP (315 aa)) is product template (PT) domain. Residues 1314–1447 (HRIVHESVDK…SSLHFEQPKV (134 aa)) form an N-terminal hotdog fold region. One can recognise a PKS/mFAS DH domain in the interval 1314–1619 (HRIVHESVDK…FQGIPRKVLN (306 aa)). Histidine 1346 (proton acceptor; for dehydratase activity) is an active-site residue. Residues 1474-1619 (LNSRMSSGVI…FQGIPRKVLN (146 aa)) are C-terminal hotdog fold. Aspartate 1533 serves as the catalytic Proton donor; for dehydratase activity. A disordered region spans residues 1619–1655 (NTAMPPPKSQNEAQVHSSPAKSRPKPPGSASSVHSGR). A compositionally biased stretch (polar residues) spans 1627–1638 (SQNEAQVHSSPA). In terms of domain architecture, Carrier 1 spans 1678–1752 (RDPMQALFKI…DLATHLGFDT (75 aa)). O-(pantetheine 4'-phosphoryl)serine is present on serine 1712. Residues 1756-1769 (DQSSGQSSSCGGLS) show a composition bias toward low complexity. Residues 1756-1796 (DQSSGQSSSCGGLSPRSDSTGEITSNATTPPSLSPRGSVSG) are disordered. Polar residues predominate over residues 1771 to 1796 (RSDSTGEITSNATTPPSLSPRGSVSG). Positions 1793 to 1870 (SVSGSQCKDV…SFKHMFQQGH (78 aa)) constitute a Carrier 2 domain. Serine 1830 bears the O-(pantetheine 4'-phosphoryl)serine mark. The tract at residues 1882–2146 (LKQYRATSTL…ERVAAFIRST (265 aa)) is thioesterase (TE) domain. The active-site For thioesterase activity is the serine 1973.

In terms of biological role, polyketide synthase; part of the Pks1 gene cluster that mediates the biosynthesis of an anthraquinone derivative pigment that contributes to conidial pigmentation that provides protection from UV radiation, heat and cold stress. The polyketide synthase Pks1 produces 1-acetyl-2,4,6,8-tetrahydroxy-9,10-anthraquinone though condensation of acetyl-CoA with malonyl-CoA. The dehydratase EthD and the laccase Mlac1 further convert the anthraquinone derivative into the final conidial pigment. The protein is Polyketide synthase 1 of Metarhizium acridum (strain CQMa 102).